Reading from the N-terminus, the 376-residue chain is Protein-arginine rhamnosyltransferase (376 aa).

Residues 13-16 (NYGD), Tyr-192, 252-254 (MAQ), and 270-274 (RGEDS) contribute to the dTDP-beta-L-rhamnose site. 14–15 (YG) lines the dTDP pocket. The active-site Proton acceptor is Asp-16. Residues Tyr-192, 252–254 (MAQ), and 270–274 (RGEDS) each bind dTDP. The active site involves Glu-272.

It belongs to the glycosyltransferase 104 family.

The catalysed reaction is dTDP-beta-L-rhamnose + L-arginyl-[protein] = N(omega)-(alpha-L-rhamnosyl)-L-arginyl-[protein] + dTDP + H(+). Its function is as follows. Protein-arginine rhamnosyltransferase that catalyzes the transfer of a single rhamnose to elongation factor P (EF-P) on 'Lys-32', a modification required for EF-P-dependent rescue of polyproline stalled ribosomes. The protein is Protein-arginine rhamnosyltransferase of Pseudomonas aeruginosa (strain ATCC 15692 / DSM 22644 / CIP 104116 / JCM 14847 / LMG 12228 / 1C / PRS 101 / PAO1).